The primary structure comprises 473 residues: Flavonol 3-O-glucosyltransferase UGT89B1 (473 aa).

His-25 acts as the Proton acceptor in catalysis. His-25 is an an anthocyanidin binding site. Residue Asp-127 is the Charge relay of the active site. The UDP-alpha-D-glucose site is built by Ala-348, Gln-350, His-365, Trp-368, Asn-369, Ser-370, and Glu-373. Residue Ala-388 participates in an anthocyanidin binding. Asp-389 and Gln-390 together coordinate UDP-alpha-D-glucose.

This sequence belongs to the UDP-glycosyltransferase family.

It carries out the reaction a flavonol + UDP-alpha-D-glucose = a flavonol 3-O-beta-D-glucoside + UDP + H(+). It catalyses the reaction a 7-O-hydroxy-flavonol + UDP-alpha-D-glucose = a flavonol 7-O-beta-D-glucoside + UDP + H(+). Its function is as follows. Possesses quercetin 3-O-glucosyltransferase, 7-O-glucosyltransferase and 4'-O-glucosyltransferase activities in vitro. Also active in vitro on benzoates and benzoate derivatives. The chain is Flavonol 3-O-glucosyltransferase UGT89B1 from Arabidopsis thaliana (Mouse-ear cress).